The following is a 407-amino-acid chain: RING finger protein 44 (407 aa).

Positions 26–58 (LSSSPGQLWGRPSNLSVEEHRASAPAGRSPRML) are disordered. An RING-type; atypical zinc finger spans residues 355–396 (CVVCFSDFEVRQLLRVLPCNHEFHAKCVDKWLKANRTCPICR).

The protein is RING finger protein 44 (Rnf44) of Mus musculus (Mouse).